Here is a 723-residue protein sequence, read N- to C-terminus: Nuclear hormone receptor HR96 (723 aa).

The segment at residues 4–79 (PKNCAVCGDK…IGMKSENIMS (76 aa)) is a DNA-binding region (nuclear receptor). 2 NR C4-type zinc fingers span residues 7–27 (CAVCGDKALGYNFNAVTCESC) and 43–67 (CPFNQNCDITVVTRRFCQKCRLRKC). Positions 95–163 (AKRRLMENGT…QASSPGTQVN (69 aa)) are disordered. Composition is skewed to polar residues over residues 122–142 (DSSSSNLDHYSGSQDSQSCGS) and 151–163 (SGRQASSPGTQVN). The NR LBD domain occupies 483-723 (EQMKLRELRL…LREIFDLKNH (241 aa)).

It belongs to the nuclear hormone receptor family. NR1 subfamily.

The protein localises to the nucleus. Its function is as follows. Binds selectively to the HSP27 20E response element. The polypeptide is Nuclear hormone receptor HR96 (Hr96) (Drosophila melanogaster (Fruit fly)).